We begin with the raw amino-acid sequence, 211 residues long: Large ribosomal subunit protein uL3 (211 aa).

The protein belongs to the universal ribosomal protein uL3 family. Part of the 50S ribosomal subunit. Forms a cluster with proteins L14 and L19.

Its function is as follows. One of the primary rRNA binding proteins, it binds directly near the 3'-end of the 23S rRNA, where it nucleates assembly of the 50S subunit. The chain is Large ribosomal subunit protein uL3 from Trichlorobacter lovleyi (strain ATCC BAA-1151 / DSM 17278 / SZ) (Geobacter lovleyi).